Reading from the N-terminus, the 466-residue chain is uncharacterized protein (466 aa).

This sequence belongs to the myoviridae tail sheath protein family.

This is an uncharacterized protein from Bacillus subtilis (strain 168).